The following is a 597-amino-acid chain: Probable translation initiation factor IF-2 (597 aa).

The region spanning leucine 10–lysine 226 is the tr-type G domain. Residues glycine 19–threonine 26 are G1. Position 19 to 26 (glycine 19 to threonine 26) interacts with GTP. The G2 stretch occupies residues alanine 44–histidine 48. The segment at aspartate 81–glycine 84 is G3. GTP-binding positions include aspartate 81–histidine 85 and asparagine 135–aspartate 138. Residues asparagine 135–aspartate 138 form a G4 region. Residues serine 203–isoleucine 205 form a G5 region.

This sequence belongs to the TRAFAC class translation factor GTPase superfamily. Classic translation factor GTPase family. IF-2 subfamily.

Function in general translation initiation by promoting the binding of the formylmethionine-tRNA to ribosomes. Seems to function along with eIF-2. The protein is Probable translation initiation factor IF-2 of Halorubrum lacusprofundi (strain ATCC 49239 / DSM 5036 / JCM 8891 / ACAM 34).